The chain runs to 961 residues: RNA polymerase II subunit A C-terminal domain phosphatase (961 aa).

Met-1 carries the N-acetylmethionine modification. One can recognise an FCP1 homology domain in the interval 178–344 (HRNRKLVLMV…SRESQTRKKV (167 aa)). The tract at residues 328-589 (DMNAPPGSRE…EEEDTDEDDH (262 aa)) is disordered. The span at 394–406 (DSPRPGKPDERDI) shows a compositional bias: basic and acidic residues. Ser-395 is modified (phosphoserine). Acidic residues predominate over residues 450–462 (LDFDLSSDSESSS). Over residues 463-475 (ESEGTKSSSSASD) the composition is skewed to low complexity. The segment covering 575–588 (SMEEEEEEDTDEDD) has biased composition (acidic residues). The 100-residue stretch at 629–728 (LKSKVLADVA…DKVEEQLFPL (100 aa)) folds into the BRCT domain. Ser-674 and Ser-740 each carry phosphoserine. 2 disordered regions span residues 730–752 (DDHTKAQRENSPAAFPDREGVPP) and 780–949 (KLIR…ADEM). Lys-780 is subject to N6-acetyllysine. A compositionally biased stretch (polar residues) spans 793–803 (SSSLPIRQEPS). Phosphoserine is present on Ser-839. Basic and acidic residues predominate over residues 850–859 (CKEDLESMDK). Composition is skewed to acidic residues over residues 860–873 (EVDDILGEGSDDSD) and 937–947 (NEDEGSSSEAD). A phosphoserine mark is found at Ser-869 and Ser-872.

As to quaternary structure, homodimer. Interacts with GTF2F1. Interacts with WDR77, SNRPB and SNRNP70. Phosphorylated. In the presence of TFIIF, the phosphorylated form has an increased CTD phosphatase activity. The phosphorylation is required for the physical interaction with GTF2F1. Ubiquitously expressed.

It is found in the nucleus. It localises to the cytoplasm. The protein localises to the cytoskeleton. The protein resides in the microtubule organizing center. Its subcellular location is the centrosome. It is found in the spindle pole. It localises to the midbody. It catalyses the reaction O-phospho-L-seryl-[protein] + H2O = L-seryl-[protein] + phosphate. The enzyme catalyses O-phospho-L-threonyl-[protein] + H2O = L-threonyl-[protein] + phosphate. Processively dephosphorylates 'Ser-2' and 'Ser-5' of the heptad repeats YSPTSPS in the C-terminal domain of the largest RNA polymerase II subunit. This promotes the activity of RNA polymerase II. Plays a role in the exit from mitosis by dephosphorylating crucial mitotic substrates (USP44, CDC20 and WEE1) that are required for M-phase-promoting factor (MPF)/CDK1 inactivation. The polypeptide is RNA polymerase II subunit A C-terminal domain phosphatase (CTDP1) (Homo sapiens (Human)).